The chain runs to 507 residues: ATP synthase subunit alpha, chloroplastic (507 aa).

G170–T177 contacts ATP.

This sequence belongs to the ATPase alpha/beta chains family. As to quaternary structure, F-type ATPases have 2 components, CF(1) - the catalytic core - and CF(0) - the membrane proton channel. CF(1) has five subunits: alpha(3), beta(3), gamma(1), delta(1), epsilon(1). CF(0) has four main subunits: a, b, b' and c.

It localises to the plastid. The protein resides in the chloroplast thylakoid membrane. It carries out the reaction ATP + H2O + 4 H(+)(in) = ADP + phosphate + 5 H(+)(out). In terms of biological role, produces ATP from ADP in the presence of a proton gradient across the membrane. The alpha chain is a regulatory subunit. The polypeptide is ATP synthase subunit alpha, chloroplastic (Nicotiana tomentosiformis (Tobacco)).